Reading from the N-terminus, the 475-residue chain is UDP-N-acetylmuramate--L-alanine ligase (475 aa).

125–131 contributes to the ATP binding site; the sequence is GTHGKTT.

The protein belongs to the MurCDEF family.

Its subcellular location is the cytoplasm. The catalysed reaction is UDP-N-acetyl-alpha-D-muramate + L-alanine + ATP = UDP-N-acetyl-alpha-D-muramoyl-L-alanine + ADP + phosphate + H(+). It functions in the pathway cell wall biogenesis; peptidoglycan biosynthesis. Cell wall formation. This Haemophilus influenzae (strain 86-028NP) protein is UDP-N-acetylmuramate--L-alanine ligase.